A 383-amino-acid chain; its full sequence is MKLSNALLTLASLALANVSTALPKASPAPSTSSSAASTSFASTSGLQFTIDGETGYFAGTNSYWIGFLTDNADVDLVMGHLKSSGLKILRVWGFNDVTSQPSSGTVWYQLHQDGKSTINTGADGLQRLDYVVSSAEQHDIKLIINFVNYWTDYGGMSAYVSAYGGSGETDFYTSDTMQSAYQTYIKTVVERYSNSSAVFAWELANEPRCPSCDTSVLYNWIEKTSKFIKGLDADRMVCIGDEGFGLNIDSDGSYPYQFSEGLNFTMNLGIDTIDFGTLHLYPDSWGTSDDWGNGWITAHGAACKAAGKPCLLEEYGVTSNHCSVEGSWQKTALSTTGVGADLFWQYGDDLSTGKSPDDGNTIYYGTSDYQCLVTDHVAAIGSA.

A signal peptide spans 1 to 21 (MKLSNALLTLASLALANVSTA). A glycan (N-linked (GlcNAc...) asparagine) is linked at N17. A substrate-binding site is contributed by W92. Residue N194 is glycosylated (N-linked (GlcNAc...) asparagine). Residue N205 coordinates substrate. E206 functions as the Proton donor in the catalytic mechanism. An N-linked (GlcNAc...) asparagine glycan is attached at N263. Residue Y281 coordinates substrate. The active-site Nucleophile is E314. W344 contacts substrate.

Belongs to the glycosyl hydrolase 5 (cellulase A) family.

It localises to the secreted. The enzyme catalyses Random hydrolysis of (1-&gt;4)-beta-D-mannosidic linkages in mannans, galactomannans and glucomannans.. Its function is as follows. Endo-1,4-mannanase, a crucial enzyme for depolymerization of seed galactomannans and wood galactoglucomannans. This chain is Probable mannan endo-1,4-beta-mannosidase A (manA), found in Aspergillus niger (strain ATCC MYA-4892 / CBS 513.88 / FGSC A1513).